A 274-amino-acid polypeptide reads, in one-letter code: Dermonecrotic toxin SdSicTox-betaIIB1bii (274 aa).

The active site involves His-5. Residues Glu-25 and Asp-27 each contribute to the Mg(2+) site. The Nucleophile role is filled by His-41. Cystine bridges form between Cys-45-Cys-51 and Cys-47-Cys-190. Asp-85 serves as a coordination point for Mg(2+).

This sequence belongs to the arthropod phospholipase D family. Class II subfamily. Requires Mg(2+) as cofactor. Expressed by the venom gland.

The protein localises to the secreted. The enzyme catalyses an N-(acyl)-sphingosylphosphocholine = an N-(acyl)-sphingosyl-1,3-cyclic phosphate + choline. The catalysed reaction is an N-(acyl)-sphingosylphosphoethanolamine = an N-(acyl)-sphingosyl-1,3-cyclic phosphate + ethanolamine. It carries out the reaction a 1-acyl-sn-glycero-3-phosphocholine = a 1-acyl-sn-glycero-2,3-cyclic phosphate + choline. It catalyses the reaction a 1-acyl-sn-glycero-3-phosphoethanolamine = a 1-acyl-sn-glycero-2,3-cyclic phosphate + ethanolamine. Its function is as follows. Dermonecrotic toxins cleave the phosphodiester linkage between the phosphate and headgroup of certain phospholipids (sphingolipid and lysolipid substrates), forming an alcohol (often choline) and a cyclic phosphate. This toxin acts on sphingomyelin (SM). It may also act on ceramide phosphoethanolamine (CPE), lysophosphatidylcholine (LPC) and lysophosphatidylethanolamine (LPE), but not on lysophosphatidylserine (LPS), and lysophosphatidylglycerol (LPG). It acts by transphosphatidylation, releasing exclusively cyclic phosphate products as second products. Induces dermonecrosis, hemolysis, increased vascular permeability, edema, inflammatory response, and platelet aggregation. This Sicarius cf. damarensis (strain GJB-2008) (Six-eyed sand spider) protein is Dermonecrotic toxin SdSicTox-betaIIB1bii.